A 238-amino-acid chain; its full sequence is IkB-like protein (238 aa).

4 ANK repeats span residues 48 to 80 (GSSV…IINH), 87 to 118 (GNSA…TRIC), 124 to 153 (GMTP…PTQK), and 158 to 187 (GFTA…PLYM). A Nuclear localization signal motif is present at residues 80–86 (HHRRDND). Positions 202–213 (KKKPKIIITGCK) match the Nuclear localization signal motif. A PxIxITxC motif; Interaction with host PPP3CA motif is present at residues 205-212 (PKIIITGC). An FLCV motif motif is present at residues 227-230 (FLCV).

Belongs to the asfivirus A238L family. As to quaternary structure, interacts with host PPIA. Interacts with host PPP3CA/Calcineurin. Interacts with host RELA/p65; interaction of the 32 kDa form with host RELA results in the formation of a stable complex with NF-kappa-B. Interacts with host PPP3R1. Interacts with host EP300; this interaction inhibits the association of host EP300 with host RELA, JUN and NFATC2. In terms of processing, the protein exists in a 28 kDa and a 32 kDa form, probably due to post-translational modifications which are neither phosphorylation, nor sumoylation.

Its subcellular location is the host nucleus. It is found in the host cytoplasm. Functionally, ikB-like protein that inhibits the binding of NF-kappa-B to DNA, thereby downregulating pro-inflammatory cytokine production. Forms a heterodimer with the NF-kappa-B subunit RELA/p65 and prevents the activation of the NF-kappa-B transcription factor. Inhibits calcineurin function, which is required for the induction of nuclear factor of activated T cells (NFAT)-dependent immune response genes. Prevents the binding of substrates to calcineurin without affecting the phosphatase activity. Does not contain the serine residues that are phosphorylated by host IkB kinase and thus is not degraded following stimulation of the NFkB pathway. The polypeptide is IkB-like protein (A238L) (Ornithodoros (relapsing fever ticks)).